The primary structure comprises 240 residues: tRNA pseudouridine synthase A (240 aa).

Asp50 acts as the Nucleophile in catalysis. Tyr109 lines the substrate pocket.

The protein belongs to the tRNA pseudouridine synthase TruA family. Homodimer.

The catalysed reaction is uridine(38/39/40) in tRNA = pseudouridine(38/39/40) in tRNA. Formation of pseudouridine at positions 38, 39 and 40 in the anticodon stem and loop of transfer RNAs. This Campylobacter jejuni subsp. jejuni serotype O:6 (strain 81116 / NCTC 11828) protein is tRNA pseudouridine synthase A.